A 610-amino-acid polypeptide reads, in one-letter code: Replication protein E1 (610 aa).

Residues 83–85 (KRK) carry the Nuclear localization signal motif. A phosphoserine; by host mark is found at Ser93 and Ser102. The short motif at 101–110 (LSPRLEAVTI) is the Nuclear export signal element. The segment at 148–312 (ESGTLVVETD…MLDHESAASS (165 aa)) is DNA-binding region. Residues 411–561 (VNFISFLCAL…LPLKENDEVL (151 aa)) enclose the SF3 helicase domain. Residue 437-444 (GPPDTGKS) participates in ATP binding. A Glycyl lysine isopeptide (Lys-Gly) (interchain with G-Cter in SUMO) cross-link involves residue Lys518. The tract at residues 591–610 (ESGRSDRAFRCTAGTNTESI) is disordered.

This sequence belongs to the papillomaviridae E1 protein family. In terms of assembly, can form hexamers. Interacts with E2 protein; this interaction increases E1 DNA binding specificity. Interacts with host DNA polymerase subunit POLA2. Interacts with host single stranded DNA-binding protein RPA1. Interacts with host TOP1; this interaction stimulates the enzymatic activity of TOP1. In terms of processing, phosphorylated. Post-translationally, sumoylated.

The protein resides in the host nucleus. It carries out the reaction Couples ATP hydrolysis with the unwinding of duplex DNA by translocating in the 3'-5' direction.. It catalyses the reaction ATP + H2O = ADP + phosphate + H(+). Its function is as follows. ATP-dependent DNA 3'-5' helicase required for initiation of viral DNA replication. It forms a complex with the viral E2 protein. The E1-E2 complex binds to the replication origin which contains binding sites for both proteins. During the initial step, a dimer of E1 interacts with a dimer of protein E2 leading to a complex that binds the viral origin of replication with high specificity. Then, a second dimer of E1 displaces the E2 dimer in an ATP-dependent manner to form the E1 tetramer. Following this, two E1 monomers are added to each half of the site, which results in the formation of two E1 trimers on the viral ori. Subsequently, two hexamers will be created. The double hexamer acts as a bi-directional helicase machinery and unwinds the viral DNA and then recruits the host DNA polymerase to start replication. This Human papillomavirus type 60 protein is Replication protein E1.